Consider the following 418-residue polypeptide: Tyrosine--tRNA ligase (418 aa).

Tyr-38 is a binding site for L-tyrosine. Positions 43–52 (CTARSLHIGS) match the 'HIGH' region motif. L-tyrosine contacts are provided by Tyr-175 and Gln-179. The 'KMSKS' region signature appears at 235-239 (KMGKT). An ATP-binding site is contributed by Lys-238. Residues 348–413 (LSVVKLLQVS…CGKKRHLKVV (66 aa)) form the S4 RNA-binding domain.

The protein belongs to the class-I aminoacyl-tRNA synthetase family. TyrS type 1 subfamily. Homodimer.

The protein localises to the cytoplasm. The enzyme catalyses tRNA(Tyr) + L-tyrosine + ATP = L-tyrosyl-tRNA(Tyr) + AMP + diphosphate + H(+). Functionally, catalyzes the attachment of tyrosine to tRNA(Tyr) in a two-step reaction: tyrosine is first activated by ATP to form Tyr-AMP and then transferred to the acceptor end of tRNA(Tyr). This chain is Tyrosine--tRNA ligase, found in Ehrlichia ruminantium (strain Welgevonden).